A 365-amino-acid chain; its full sequence is Flavone synthase (365 aa).

H76, H218, D220, and H276 together coordinate Fe cation. One can recognise a Fe2OG dioxygenase domain in the interval 194–295; the sequence is MEQKVLINYY…RLSIATFQNP (102 aa). The segment at 345 to 365 is disordered; it reads RLQDEKAKLEMKSKSADENLA.

This sequence belongs to the iron/ascorbate-dependent oxidoreductase family. It depends on Fe cation as a cofactor. The cofactor is L-ascorbate.

It localises to the cytoplasm. The enzyme catalyses a flavanone + 2-oxoglutarate + O2 = a flavone + succinate + CO2 + H2O. The protein operates within secondary metabolite biosynthesis; flavonoid biosynthesis. In terms of biological role, involved in the conversion of naringenin to apigenin. Acts via a direct 2,3-desaturation of flavanones instead of a sequential hydroxylation/dehydratation mechanism. The sequence is that of Flavone synthase (FNSI) from Petroselinum crispum (Parsley).